A 467-amino-acid chain; its full sequence is UDP-N-acetylmuramate--L-alanine ligase (467 aa).

ATP is bound at residue 114–120 (GTHGKTT).

The protein belongs to the MurCDEF family.

It localises to the cytoplasm. It carries out the reaction UDP-N-acetyl-alpha-D-muramate + L-alanine + ATP = UDP-N-acetyl-alpha-D-muramoyl-L-alanine + ADP + phosphate + H(+). It participates in cell wall biogenesis; peptidoglycan biosynthesis. Functionally, cell wall formation. The sequence is that of UDP-N-acetylmuramate--L-alanine ligase from Bradyrhizobium diazoefficiens (strain JCM 10833 / BCRC 13528 / IAM 13628 / NBRC 14792 / USDA 110).